Reading from the N-terminus, the 441-residue chain is Xaa-Pro dipeptidase (441 aa).

Mn(2+) contacts are provided by aspartate 244, aspartate 255, histidine 336, glutamate 381, and glutamate 420.

Belongs to the peptidase M24B family. Bacterial-type prolidase subfamily. It depends on Mn(2+) as a cofactor.

The catalysed reaction is Xaa-L-Pro dipeptide + H2O = an L-alpha-amino acid + L-proline. Its function is as follows. Splits dipeptides with a prolyl residue in the C-terminal position. The protein is Xaa-Pro dipeptidase of Xanthomonas euvesicatoria pv. vesicatoria (strain 85-10) (Xanthomonas campestris pv. vesicatoria).